The sequence spans 71 residues: Conotoxin TxMMSK-05 (71 aa).

An N-terminal signal peptide occupies residues 1-20 (MMSKLGALLIICLLLFPLTA). The propeptide occupies 21-52 (VPLDGDQHADRPAERLQDDISSKHHPMFDAVR). Disulfide bonds link Cys54–Cys70, Cys55–Cys66, and Cys60–Cys69.

It belongs to the conotoxin M superfamily. In terms of tissue distribution, expressed by the venom duct.

It localises to the secreted. The chain is Conotoxin TxMMSK-05 from Conus textile (Cloth-of-gold cone).